The primary structure comprises 1659 residues: Cortactin-binding protein 2 (1659 aa).

Positions Met1 to Ala23 are disordered. A coiled-coil region spans residues Arg119–Lys276. 2 disordered regions span residues Leu324–Gly436 and Gly450–Ser474. Composition is skewed to low complexity over residues Ala337–Ala348 and Gly381–Ser392. Over residues Thr405–Ala418 the composition is skewed to polar residues. Residue Arg494 is modified to Asymmetric dimethylarginine. Residues Phe495–Ser612 form a disordered region. A compositionally biased stretch (polar residues) spans Thr579–Gln589. ANK repeat units lie at residues Gly705–Tyr735, Asp739–Ala768, Asn772–His801, Gly805–Val834, and Asp838–Gly867. Residues Ser869 to Ser893 are disordered. Residues Glu908–Arg938 form an ANK 6 repeat. The disordered stretch occupies residues Lys1443–Glu1478. Ser1520 carries the phosphoserine modification. The segment at Arg1613 to Lys1659 is disordered. Residues Ser1620 to Gln1634 show a composition bias toward low complexity. The span at Ser1641–Lys1659 shows a compositional bias: basic and acidic residues.

In terms of assembly, interacts with CTTN/cortactin SH3 domain. Interacts with STRN, STRN4/zinedin and MOB4/phocein; this interactions mediate the association with the STRIPAK core complex and may regulate dendritic spine distribution of the STRIPAK complex in hippocampal neurons. Activation of glutamate receptors weakens the interaction with STRN and STRN4.

The protein resides in the cytoplasm. Its subcellular location is the cell cortex. The protein localises to the cell projection. It is found in the dendritic spine. Regulates the dendritic spine distribution of CTTN/cortactin in hippocampal neurons, and thus controls dendritic spinogenesis and dendritic spine maintenance. Associates with the striatin-interacting phosphatase and kinase (STRIPAK) core complex to regulate dendritic spine distribution of the STRIPAK complex in hippocampal neurons. The polypeptide is Cortactin-binding protein 2 (CTTNBP2) (Saimiri boliviensis boliviensis (Bolivian squirrel monkey)).